The following is a 168-amino-acid chain: Acetone carboxylase gamma subunit (168 aa).

In terms of assembly, heterohexamer of two alpha, two beta and two gamma subunits. The cofactor is Fe cation. Mg(2+) is required as a cofactor. Zn(2+) serves as cofactor.

It catalyses the reaction acetone + hydrogencarbonate + 2 ATP + 3 H2O = acetoacetate + 2 AMP + 4 phosphate + 4 H(+). In terms of biological role, catalyzes the carboxylation of acetone to form acetoacetate. Has a reduced activity on butanone, and no activity on 2-pentatone, 3-pentatone, 2-hexanone, chloroacetone, pyruvate, phosphoenolpyruvate, acetaldehyde, propionaldehyde and propylene oxide. In Xanthobacter autotrophicus (strain ATCC BAA-1158 / Py2), this protein is Acetone carboxylase gamma subunit.